We begin with the raw amino-acid sequence, 208 residues long: Probable DNA-3-methyladenine glycosylase (208 aa).

The protein belongs to the DNA glycosylase MPG family.

It localises to the nucleus. The enzyme catalyses Hydrolysis of alkylated DNA, releasing 3-methyladenine, 3-methylguanine, 7-methylguanine and 7-methyladenine.. Hydrolysis of the deoxyribose N-glycosidic bond to excise 3-methyladenine, and 7-methylguanine from the damaged DNA polymer formed by alkylation lesions. In Encephalitozoon cuniculi (strain GB-M1) (Microsporidian parasite), this protein is Probable DNA-3-methyladenine glycosylase.